The sequence spans 221 residues: GTP-binding nuclear protein Ran-2 (221 aa).

One can recognise a Small GTPase Ran-type domain in the interval D10–D174. Residue D21 to T28 participates in GTP binding. The tract at residues K40–V48 is switch-I. Residues G71, N125–D128, and S153–K155 contribute to the GTP site. A switch-II region spans residues G71 to Q87. Positions A202–L212 are enriched in low complexity. The tract at residues A202 to E221 is disordered.

It belongs to the small GTPase superfamily. Ran family. As to quaternary structure, found in a nuclear export complex with RanGTP, exportin and pre-miRNA. Interacts with RanBP1a and RanBP1b. Interacts with PHRIP1. Interacts with KPNB1. Binds to PHIP1.

It is found in the nucleus. Its subcellular location is the nucleus envelope. GTP-binding protein involved in nucleocytoplasmic transport. Required for the import of protein into the nucleus and also for RNA export. Involved in chromatin condensation and control of cell cycle. In Arabidopsis thaliana (Mouse-ear cress), this protein is GTP-binding nuclear protein Ran-2.